Here is a 492-residue protein sequence, read N- to C-terminus: Cytoplasmic dynein 1 light intermediate chain 2 (492 aa).

61-68 contacts ATP; it reads GEDGSGKT. Disordered regions lie at residues 187–206, 371–423, and 437–492; these read PEEG…SGSD, AKQP…KNNA, and LSKK…ENEA. A Phosphoserine modification is found at serine 194. Polar residues predominate over residues 371 to 381; sequence AKQPATPTRAS. Phosphoserine occurs at positions 383 and 391. Arginine 397 is subject to Omega-N-methylarginine. Threonine 441 carries the phosphothreonine modification. A phosphoserine mark is found at serine 443 and serine 446. Residues 452–469 show a composition bias toward polar residues; that stretch reads VQSTAKKSGQKTVLSNVQ. The span at 471-480 shows a compositional bias: basic and acidic residues; that stretch reads ELDRMTRKPD. The span at 482 to 492 shows a compositional bias: polar residues; it reads MVTNSSTENEA.

It belongs to the dynein light intermediate chain family. Homodimer. The cytoplasmic dynein 1 complex consists of two catalytic heavy chains (HCs) and a number of non-catalytic subunits presented by intermediate chains (ICs), light intermediate chains (LICs) and light chains (LCs); the composition seems to vary in respect to the IC, LIC and LC composition. The heavy chain homodimer serves as a scaffold for the probable homodimeric assembly of the respective non-catalytic subunits. The ICs and LICs bind directly to the HC dimer and the LCs assemble on the IC dimer. Interacts with DYNC1H1; DYNC1LI1 and DYNC1LI2 bind mutually exclusive to DYNC1H.

The protein resides in the cytoplasm. The protein localises to the cytoskeleton. In terms of biological role, acts as one of several non-catalytic accessory components of the cytoplasmic dynein 1 complex that are thought to be involved in linking dynein to cargos and to adapter proteins that regulate dynein function. Cytoplasmic dynein 1 acts as a motor for the intracellular retrograde motility of vesicles and organelles along microtubules. May play a role in binding dynein to membranous organelles or chromosomes. This chain is Cytoplasmic dynein 1 light intermediate chain 2 (DYNC1LI2), found in Pongo abelii (Sumatran orangutan).